Here is a 464-residue protein sequence, read N- to C-terminus: MREKTPKQIVDLLDKYIVGQNEAKKSVAIALYNRYRRAQLPEDVQKDITPKNILMAGPTGVGKTEIARRLADIVDAPFVKVEATKFTEVGYVGRDVESMVRDLANEAVRIVEKEEFVKVEGQAIRQANKTLVRLLVPGVKRNNRQNQMQQMQEMIQSLLAGGGMSEETEEVTDEIRNQRLSVAEKLDRGLLENEEVTIEVEQAPKANPMGDMMGQMGMDMSSMLGDMLPKKKVKRTLPVSQARKLLVQEEEKKLVNYDDIYQKAMDRAGQSGIIFIDEIDKITAADKRNSAGVSREGVQRDILPIVEGSTVSTKYGPLSTDHILFIAAGAFAESKPSDLIPELQGRFPIRVELDALTKDDFVRILKDPQNSLLKQYIALLKADGVDLVFTAEAVDKIAEIAFEVNQGTDNIGARRLATILEKLLEEVLYEGPDMEMGQITITQAYVEQKLSDIVKNKDLTKFIL.

ATP contacts are provided by residues Val-18, 60-65 (GVGKTE), Asp-277, Glu-342, and Arg-414.

This sequence belongs to the ClpX chaperone family. HslU subfamily. In terms of assembly, a double ring-shaped homohexamer of HslV is capped on each side by a ring-shaped HslU homohexamer. The assembly of the HslU/HslV complex is dependent on binding of ATP.

Its subcellular location is the cytoplasm. Functionally, ATPase subunit of a proteasome-like degradation complex; this subunit has chaperone activity. The binding of ATP and its subsequent hydrolysis by HslU are essential for unfolding of protein substrates subsequently hydrolyzed by HslV. HslU recognizes the N-terminal part of its protein substrates and unfolds these before they are guided to HslV for hydrolysis. This Lactobacillus leichmannii protein is ATP-dependent protease ATPase subunit HslU.